Here is a 317-residue protein sequence, read N- to C-terminus: NAC domain-containing protein 55 (317 aa).

The region spanning 14–162 (LPPGFRFYPT…DWVLCRIYKK (149 aa)) is the NAC domain. The DNA-binding element occupies 111-168 (VGIKKALVFYIGKAPKGTKTNWIMHEYRLIEPSRRNGSTKLDDWVLCRIYKKQTSAQK).

Expressed in leaves.

It is found in the nucleus. Its function is as follows. Transcription factors that bind specifically to the 5'-CATGTG-3' motif. The polypeptide is NAC domain-containing protein 55 (NAC055) (Arabidopsis thaliana (Mouse-ear cress)).